A 260-amino-acid polypeptide reads, in one-letter code: Proteasome subunit alpha (260 aa).

Belongs to the peptidase T1A family. In terms of assembly, the 20S proteasome core is composed of 14 alpha and 14 beta subunits that assemble into four stacked heptameric rings, resulting in a barrel-shaped structure. The two inner rings, each composed of seven catalytic beta subunits, are sandwiched by two outer rings, each composed of seven alpha subunits. The catalytic chamber with the active sites is on the inside of the barrel. Has a gated structure, the ends of the cylinder being occluded by the N-termini of the alpha-subunits. Is capped at one or both ends by the proteasome regulatory ATPase, PAN.

The protein resides in the cytoplasm. Its activity is regulated as follows. The formation of the proteasomal ATPase PAN-20S proteasome complex, via the docking of the C-termini of PAN into the intersubunit pockets in the alpha-rings, triggers opening of the gate for substrate entry. Interconversion between the open-gate and close-gate conformations leads to a dynamic regulation of the 20S proteasome proteolysis activity. In terms of biological role, component of the proteasome core, a large protease complex with broad specificity involved in protein degradation. The polypeptide is Proteasome subunit alpha (Thermococcus onnurineus (strain NA1)).